Here is a 532-residue protein sequence, read N- to C-terminus: 4-amino-L-phenylalanyl-[CmlP-peptidyl-carrier-protein] 3-hydroxylase (532 aa).

Fe cation contacts are provided by His305, His307, Asp309, His310, Glu377, and Asp403.

Belongs to the metallo-beta-lactamase superfamily. In terms of assembly, homodimer. Requires Fe(2+) as cofactor.

The catalysed reaction is 4-amino-L-phenylalanyl-[peptidyl-carrier protein] + AH2 + O2 = (2R)-2-(4-aminophenyl)-L-seryl-[peptidyl-carrier protein] + A + H2O. The protein operates within antibiotic biosynthesis. Its function is as follows. Involved in chloramphenicol biosynthesis. Catalyzes the beta-hydroxylation of 4-amino-L-phenylalanine (L-PAPA) covalently bound to CmlP to form L-p-aminophenylserine. The protein is 4-amino-L-phenylalanyl-[CmlP-peptidyl-carrier-protein] 3-hydroxylase of Streptomyces venezuelae (strain ATCC 10712 / CBS 650.69 / DSM 40230 / JCM 4526 / NBRC 13096 / PD 04745).